Reading from the N-terminus, the 157-residue chain is Transmembrane protein 42 (157 aa).

Transmembrane regions (helical) follow at residues 37–57 (FWGV…AAAA), 67–87 (IGLC…MWTF), 100–120 (IASV…GYLL), and 124–144 (CQEI…TLIH).

It is found in the membrane. The chain is Transmembrane protein 42 (Tmem42) from Mus musculus (Mouse).